The following is a 166-amino-acid chain: Myosin regulatory light chain 2, ventricular/cardiac muscle isoform (166 aa).

A N,N,N-trimethylalanine modification is found at Ala2. Residues Ser14 and Ser15 each carry the phosphoserine; by MLCK modification. Residue Ser19 is modified to Phosphoserine. EF-hand domains are found at residues 24 to 59, 94 to 129, and 130 to 165; these read TQIQEFKEAFTIMDQNRDGFIDKNDLRDTFAALGRV, DPEETILNAFKVFDPEGKGSLKADYVREMLTTQAER, and FSKEEIDQMFAAFPPDVTGNLDYKNLVHIITHGEEK. Positions 37, 39, 41, and 48 each coordinate Ca(2+). Thr52 carries the post-translational modification Phosphothreonine.

As to quaternary structure, myosin is a hexamer of 2 heavy chains and 4 light chains. Interacts with MYOC. In terms of processing, N-terminus is methylated by METTL11A/NTM1. Phosphorylated by MYLK3 and MYLK2; promotes cardiac muscle contraction and function. Dephosphorylated by PPP1CB complexed to PPP1R12B. The phosphorylated form in adult is expressed as gradients across the heart from endocardium (low phosphorylation) to epicardium (high phosphorylation); regulates cardiac torsion and workload distribution. Abundantly expressed in both cardiac and slow skeletal muscle. In the adult heart, the phosphorylated form is highly expressed in epicardium and weakly in endocardium.

Its subcellular location is the cytoplasm. It localises to the myofibril. It is found in the sarcomere. The protein localises to the a band. Contractile protein that plays a role in heart development and function. Following phosphorylation, plays a role in cross-bridge cycling kinetics and cardiac muscle contraction by increasing myosin lever arm stiffness and promoting myosin head diffusion; as a consequence of the increase in maximum contraction force and calcium sensitivity of contraction force. These events altogether slow down myosin kinetics and prolong duty cycle resulting in accumulated myosins being cooperatively recruited to actin binding sites to sustain thin filament activation as a means to fine-tune myofilament calcium sensitivity to force. During cardiogenesis plays an early role in cardiac contractility by promoting cardiac myofibril assembly. The polypeptide is Myosin regulatory light chain 2, ventricular/cardiac muscle isoform (Mus musculus (Mouse)).